The sequence spans 1088 residues: DNA polymerase delta catalytic subunit (1088 aa).

The protein belongs to the DNA polymerase type-B family. In terms of assembly, heterodimer with subunits of 125 kDa and 50 kDa. The 125 kDa subunit contains the polymerase active site and most likely the active site for the 3'-5' exonuclease activity.

Its subcellular location is the nucleus. It catalyses the reaction DNA(n) + a 2'-deoxyribonucleoside 5'-triphosphate = DNA(n+1) + diphosphate. Functionally, this polymerase possesses two enzymatic activities: DNA synthesis (polymerase) and an exonucleolytic activity that degrades single-stranded DNA in the 3'- to 5'-direction. This chain is DNA polymerase delta catalytic subunit (POLD1), found in Glycine max (Soybean).